Consider the following 318-residue polypeptide: Forkhead box protein I2 (318 aa).

The disordered stretch occupies residues 1–30; it reads MATYCDDLGPSSAPPGQAQATAHPPGYEPG. The fork-head DNA-binding region spans 102 to 196; sequence RPPYSYSALI…DNGNFRRKRK (95 aa).

Its subcellular location is the nucleus. Functionally, possible transcriptional activator. This Homo sapiens (Human) protein is Forkhead box protein I2 (FOXI2).